The following is a 285-amino-acid chain: Bifunctional protein FolD (285 aa).

NADP(+) contacts are provided by residues 166–168 (GRS), serine 191, and threonine 232.

This sequence belongs to the tetrahydrofolate dehydrogenase/cyclohydrolase family. Homodimer.

It carries out the reaction (6R)-5,10-methylene-5,6,7,8-tetrahydrofolate + NADP(+) = (6R)-5,10-methenyltetrahydrofolate + NADPH. The enzyme catalyses (6R)-5,10-methenyltetrahydrofolate + H2O = (6R)-10-formyltetrahydrofolate + H(+). It functions in the pathway one-carbon metabolism; tetrahydrofolate interconversion. Catalyzes the oxidation of 5,10-methylenetetrahydrofolate to 5,10-methenyltetrahydrofolate and then the hydrolysis of 5,10-methenyltetrahydrofolate to 10-formyltetrahydrofolate. The polypeptide is Bifunctional protein FolD (Chloroflexus aggregans (strain MD-66 / DSM 9485)).